A 147-amino-acid polypeptide reads, in one-letter code: Hemoglobin subunit beta (147 aa).

Residue Val2 is modified to N-acetylvaline. The Globin domain maps to 3 to 147 (NLTSDEKTAV…VANALAHKYH (145 aa)). A Phosphoserine modification is found at Ser45. Lys60 is subject to N6-acetyllysine. His64 serves as a coordination point for heme b. Lys83 is modified (N6-acetyllysine). His93 lines the heme b pocket. Cys94 is modified (S-nitrosocysteine). An N6-acetyllysine modification is found at Lys145.

This sequence belongs to the globin family. As to quaternary structure, heterotetramer of two alpha chains and two beta chains. Red blood cells.

In terms of biological role, involved in oxygen transport from the lung to the various peripheral tissues. The protein is Hemoglobin subunit beta (HBB) of Dasypus novemcinctus (Nine-banded armadillo).